An 80-amino-acid polypeptide reads, in one-letter code: Sulfur carrier protein TusA (80 aa).

Cys17 serves as the catalytic Cysteine persulfide intermediate.

The protein belongs to the sulfur carrier protein TusA family.

The protein resides in the cytoplasm. Sulfur carrier protein which probably makes part of a sulfur-relay system. The sequence is that of Sulfur carrier protein TusA from Pseudomonas putida (strain ATCC 47054 / DSM 6125 / CFBP 8728 / NCIMB 11950 / KT2440).